A 411-amino-acid chain; its full sequence is Protein translocase subunit SecY (411 aa).

10 consecutive transmembrane segments (helical) span residues Ile-11–Gly-31, Ile-52–Ile-72, Ala-111–Phe-131, Phe-135–Leu-155, Gly-163–Leu-180, Ser-197–Val-217, Val-253–Ile-273, Leu-291–Val-311, Thr-349–Val-369, and Gly-377–Ile-397.

Belongs to the SecY/SEC61-alpha family. In terms of assembly, component of the plastid Sec protein translocase complex, which is composed of at least SecY, SecE and SecG.

It localises to the plastid. The protein resides in the chloroplast thylakoid membrane. In terms of biological role, the central subunit of the protein translocation channel SecYE. Consists of two halves formed by TMs 1-5 and 6-10. These two domains form a lateral gate at the front which open onto the bilayer between TMs 2 and 7, and are clamped together by SecE at the back. The channel is closed by both a pore ring composed of hydrophobic SecY resides and a short helix (helix 2A) on the extracellular side of the membrane which forms a plug. The polypeptide is Protein translocase subunit SecY (Pyropia yezoensis (Susabi-nori)).